An 871-amino-acid polypeptide reads, in one-letter code: Pentatricopeptide repeat-containing protein At3g06920 (871 aa).

PPR repeat units lie at residues 97–131 (CPES…GFGP), 132–166 (SVNT…KFRP), 167–201 (AFSA…GYEP), 202–236 (TVHL…SLDA), 237–271 (DIVL…GLKP), 272–306 (DEVT…RRVP), 307–341 (CTYA…GSIP), 342–372 (SVIA…MKKD), 376–410 (NLST…GLFP), 411–445 (NVRT…VCTP), 446–480 (DEIT…DCRT), 481–515 (NSIV…NCSP), 516–550 (DLQL…RFVP), 551–585 (DARS…GCVL), 586–620 (DTRA…GFEP), 621–655 (TVVT…RIEL), 656–690 (NVVI…GLTP), 691–725 (NLYT…KCTP), 726–760 (NQVT…GMKP), 761–795 (STIS…GGVP), and 796–830 (DSAC…GLPI).

The protein belongs to the PPR family. P subfamily.

This is Pentatricopeptide repeat-containing protein At3g06920 from Arabidopsis thaliana (Mouse-ear cress).